The primary structure comprises 347 residues: Phenylalanine--tRNA ligase alpha subunit (347 aa).

E261 is a Mg(2+) binding site.

It belongs to the class-II aminoacyl-tRNA synthetase family. Phe-tRNA synthetase alpha subunit type 1 subfamily. Tetramer of two alpha and two beta subunits. It depends on Mg(2+) as a cofactor.

Its subcellular location is the cytoplasm. The catalysed reaction is tRNA(Phe) + L-phenylalanine + ATP = L-phenylalanyl-tRNA(Phe) + AMP + diphosphate + H(+). The sequence is that of Phenylalanine--tRNA ligase alpha subunit from Streptococcus uberis (strain ATCC BAA-854 / 0140J).